Here is a 219-residue protein sequence, read N- to C-terminus: uncharacterized protein (219 aa).

Residues 28 to 50 form a helical membrane-spanning segment; it reads IVSSLIAGGYALFVSAFTSYVYT. Residues 155–218 are a coiled coil; the sequence is EILRESLSEI…EEIEKELEFF (64 aa).

The protein resides in the membrane. This is an uncharacterized protein from Aquifex aeolicus (strain VF5).